The following is a 131-amino-acid chain: Glycine cleavage system H protein (131 aa).

The Lipoyl-binding domain occupies 24–106 (RAIVGISDHA…YGEGWIMVIE (83 aa)). An N6-lipoyllysine modification is found at Lys-65.

It belongs to the GcvH family. As to quaternary structure, the glycine cleavage system is composed of four proteins: P, T, L and H. Requires (R)-lipoate as cofactor.

The glycine cleavage system catalyzes the degradation of glycine. The H protein shuttles the methylamine group of glycine from the P protein to the T protein. This chain is Glycine cleavage system H protein, found in Xylella fastidiosa (strain M12).